The chain runs to 595 residues: SVP1-like protein 2 (595 aa).

The interval 1 to 28 (MVLAHSINTNPNTNTNTNNTSTTSSTTT) is disordered. The stretch at 30–68 (PNDSKILCINFNQDQGCFAISHEQGFLVYNTDPIELRVK) is one WD 1 repeat. 2 stretches are compositionally biased toward low complexity: residues 76 to 112 (HTTSSRSNHSNGSNSNNNHRNNSTGSNGSVSSSGSNN) and 270 to 339 (LSPT…TTTT). Disordered regions lie at residues 76-132 (HTTS…GSGS) and 264-342 (FSKR…TSAK). WD repeat units lie at residues 389 to 429 (AHKS…LLYE) and 434 to 473 (IDRAIITSMKFSHDDSKLAVLSDKHTLHVYNIDETQYPND). Residues 467–490 (ETQYPNDGGSGGTKDGGGGGRGSK) form a disordered region. A compositionally biased stretch (gly residues) spans 474–488 (GGSGGTKDGGGGGRG).

It belongs to the WD repeat PROPPIN family.

Its subcellular location is the vacuole membrane. It localises to the cytoplasmic vesicle membrane. Functionally, involved in mitochondrial or peroxisomal functions and amino acid signaling pathways. This chain is SVP1-like protein 2 (HSV2), found in Candida albicans (strain SC5314 / ATCC MYA-2876) (Yeast).